Here is a 652-residue protein sequence, read N- to C-terminus: ATP-dependent zinc metalloprotease FtsH (652 aa).

Topologically, residues 1-11 are cytoplasmic; the sequence is MKKQNNGLIKN. Residues 12–32 form a helical membrane-spanning segment; it reads PFLWLLFIFFLVTGFQYFYSG. Over 33-131 the chain is Extracellular; that stretch reads NNSGGSQQIN…EVTVKHESSS (99 aa). Residues 132–152 form a helical membrane-spanning segment; that stretch reads GIWINLLVSIVPFGILFFFLF. At 153–652 the chain is on the cytoplasmic side; sequence SMMGNMGGGN…EVKSKMNDEK (500 aa). 227–234 lines the ATP pocket; it reads GPPGTGKT. His449 contacts Zn(2+). Residue Glu450 is part of the active site. The Zn(2+) site is built by His453 and Asp525. The segment at 628–652 is disordered; it reads MPEAVEEESHALSYDEVKSKMNDEK. The span at 634–652 shows a compositional bias: basic and acidic residues; sequence EESHALSYDEVKSKMNDEK.

In the central section; belongs to the AAA ATPase family. It in the C-terminal section; belongs to the peptidase M41 family. In terms of assembly, homohexamer. Zn(2+) is required as a cofactor.

The protein localises to the cell membrane. Functionally, acts as a processive, ATP-dependent zinc metallopeptidase for both cytoplasmic and membrane proteins. Plays a role in the quality control of integral membrane proteins. This Streptococcus pneumoniae serotype 4 (strain ATCC BAA-334 / TIGR4) protein is ATP-dependent zinc metalloprotease FtsH.